Consider the following 215-residue polypeptide: FGFR1 oncogene partner 2 homolog (215 aa).

The stretch at Ala12–Ser186 forms a coiled coil. The interval Glu193 to Ser215 is disordered.

It belongs to the SIKE family.

It is found in the cytoplasm. The chain is FGFR1 oncogene partner 2 homolog (fgfr1op2) from Xenopus laevis (African clawed frog).